Reading from the N-terminus, the 428-residue chain is YTH domain-containing protein ECT1 (428 aa).

The YTH domain occupies 245–382; it reads AKFFVIKSYS…EHGTKIIKIF (138 aa). RNA-binding positions include 251 to 253, Asp257, 267 to 268, Asn300, Trp324, Trp329, and Trp337; these read KSY and WS.

Interacts (via C-terminus) with CIPK1. Expressed in root apex, shoot apex, lateral root primordia, stamens, carpels and trichomes.

It localises to the nucleus. The protein resides in the cytoplasm. In terms of biological role, specifically recognizes and binds N6-methyladenosine (m6A)-containing RNAs, and regulates mRNA stability. M6A is a modification present at internal sites of mRNAs and some non-coding RNAs and plays a role in mRNA stability and processing. The sequence is that of YTH domain-containing protein ECT1 from Arabidopsis thaliana (Mouse-ear cress).